A 463-amino-acid polypeptide reads, in one-letter code: tRNA-2-methylthio-N(6)-dimethylallyladenosine synthase (463 aa).

In terms of domain architecture, MTTase N-terminal spans 5 to 125 (RKLHIKSYGC…LPQLLAKAEQ (121 aa)). Residues Cys-14, Cys-50, Cys-88, Cys-166, Cys-170, and Cys-173 each contribute to the [4Fe-4S] cluster site. The 233-residue stretch at 152–384 (RARGISAFVT…QQLIDQQQSA (233 aa)) folds into the Radical SAM core domain. One can recognise a TRAM domain in the interval 387 to 449 (KAAIGRTVEV…RYSLLGELAS (63 aa)).

This sequence belongs to the methylthiotransferase family. MiaB subfamily. Monomer. [4Fe-4S] cluster serves as cofactor.

The protein resides in the cytoplasm. It carries out the reaction N(6)-dimethylallyladenosine(37) in tRNA + (sulfur carrier)-SH + AH2 + 2 S-adenosyl-L-methionine = 2-methylsulfanyl-N(6)-dimethylallyladenosine(37) in tRNA + (sulfur carrier)-H + 5'-deoxyadenosine + L-methionine + A + S-adenosyl-L-homocysteine + 2 H(+). Functionally, catalyzes the methylthiolation of N6-(dimethylallyl)adenosine (i(6)A), leading to the formation of 2-methylthio-N6-(dimethylallyl)adenosine (ms(2)i(6)A) at position 37 in tRNAs that read codons beginning with uridine. The chain is tRNA-2-methylthio-N(6)-dimethylallyladenosine synthase from Rhodopseudomonas palustris (strain TIE-1).